We begin with the raw amino-acid sequence, 353 residues long: Photosystem II protein D1 (353 aa).

An N-acetylthreonine modification is found at threonine 2. Residue threonine 2 is modified to Phosphothreonine. Transmembrane regions (helical) follow at residues 29-46 (YIGWFGVLMIPTLLTATS), 118-133 (HFLLGVACYMGREWEL), and 142-156 (WIAIAYSAPVAAATA). Residue histidine 118 coordinates chlorophyll a. Pheophytin a is bound at residue tyrosine 126. Positions 170 and 189 each coordinate [CaMn4O5] cluster. The chain crosses the membrane as a helical span at residues 197–218 (FHMLGVAGVFGGSLFSAMHGSL). Histidine 198 serves as a coordination point for chlorophyll a. A quinone-binding positions include histidine 215 and 264–265 (SF). Histidine 215 is a Fe cation binding site. Histidine 272 is a Fe cation binding site. A helical membrane pass occupies residues 274 to 288 (FLAAWPVIGIWFTAL). The [CaMn4O5] cluster site is built by histidine 332, glutamate 333, aspartate 342, and alanine 344. A propeptide spanning residues 345 to 353 (TFEVSATNA) is cleaved from the precursor.

The protein belongs to the reaction center PufL/M/PsbA/D family. PSII is composed of 1 copy each of membrane proteins PsbA, PsbB, PsbC, PsbD, PsbE, PsbF, PsbH, PsbI, PsbJ, PsbK, PsbL, PsbM, PsbT, PsbX, PsbY, PsbZ, Psb30/Ycf12, at least 3 peripheral proteins of the oxygen-evolving complex and a large number of cofactors. It forms dimeric complexes. It depends on The D1/D2 heterodimer binds P680, chlorophylls that are the primary electron donor of PSII, and subsequent electron acceptors. It shares a non-heme iron and each subunit binds pheophytin, quinone, additional chlorophylls, carotenoids and lipids. D1 provides most of the ligands for the Mn4-Ca-O5 cluster of the oxygen-evolving complex (OEC). There is also a Cl(-1) ion associated with D1 and D2, which is required for oxygen evolution. The PSII complex binds additional chlorophylls, carotenoids and specific lipids. as a cofactor. Post-translationally, tyr-161 forms a radical intermediate that is referred to as redox-active TyrZ, YZ or Y-Z. C-terminally processed by CTPA; processing is essential to allow assembly of the oxygen-evolving complex and thus photosynthetic growth.

It is found in the plastid membrane. The catalysed reaction is 2 a plastoquinone + 4 hnu + 2 H2O = 2 a plastoquinol + O2. In terms of biological role, photosystem II (PSII) is a light-driven water:plastoquinone oxidoreductase that uses light energy to abstract electrons from H(2)O, generating O(2) and a proton gradient subsequently used for ATP formation. It consists of a core antenna complex that captures photons, and an electron transfer chain that converts photonic excitation into a charge separation. The D1/D2 (PsbA/PsbD) reaction center heterodimer binds P680, the primary electron donor of PSII as well as several subsequent electron acceptors. The protein is Photosystem II protein D1 of Cuscuta gronovii (Common dodder).